Reading from the N-terminus, the 1393-residue chain is ABC transporter G family member 3 (1393 aa).

Basic and acidic residues predominate over residues 1–14; the sequence is MEDKNNIELQEKAP. The interval 1–68 is disordered; it reads MEDKNNIELQ…IIYQNPTPAS (68 aa). The span at 15–50 shows a compositional bias: low complexity; the sequence is DNYNNNNNNNNNNNNNNNNNNNNNNNNNNNNNNDIN. The ABC transporter 1 domain occupies 100–353; the sequence is VSANNISYYI…YFSSIGLAPL (254 aa). 144 to 151 lines the ATP pocket; sequence GIPGAGKS. The 226-residue stretch at 473–698 folds into the ABC transmembrane type-2 1 domain; it reads MQYAVRFFQA…SYADGGYQGN (226 aa). Transmembrane regions (helical) follow at residues 479–499, 509–529, 558–578, 585–605, 615–635, 640–660, and 724–744; these read FFQA…MGFT, LVYF…EEFF, IPIS…IAGF, FIVF…IFQV, LASL…GYMI, IPGW…IDMV, and VDIV…FLGV. The 253-residue stretch at 783–1035 folds into the ABC transporter 2 domain; it reads MTFQNLNYVV…VIQHFTSAGY (253 aa). Position 828-835 (828-835) interacts with ATP; the sequence is GPSGAGKS. Residues 1121 to 1388 enclose the ABC transmembrane type-2 2 domain; the sequence is QTILLRFLRS…FLGYLALRFI (268 aa). Transmembrane regions (helical) follow at residues 1122-1142, 1157-1177, 1206-1226, 1235-1255, 1265-1285, and 1364-1384; these read TILL…TLFL, LVFL…PTIV, LPMM…LTGL, FFFS…LATL, IAIL…GFFI, and FYNL…GYLA.

Belongs to the ABC transporter superfamily. ABCG family. PDR (TC 3.A.1.205) subfamily.

The protein localises to the membrane. This is ABC transporter G family member 3 (abcG3) from Dictyostelium discoideum (Social amoeba).